The following is a 335-amino-acid chain: Glycerol-3-phosphate dehydrogenase [NAD(P)+] (335 aa).

Residues serine 12, tryptophan 13, and lysine 107 each contribute to the NADPH site. The sn-glycerol 3-phosphate site is built by lysine 107, glycine 138, and serine 140. NADPH is bound at residue alanine 142. Sn-glycerol 3-phosphate contacts are provided by lysine 193, aspartate 246, serine 256, arginine 257, and asparagine 258. Lysine 193 functions as the Proton acceptor in the catalytic mechanism. Arginine 257 is an NADPH binding site. Valine 281 and glutamate 283 together coordinate NADPH.

Belongs to the NAD-dependent glycerol-3-phosphate dehydrogenase family.

It is found in the cytoplasm. It catalyses the reaction sn-glycerol 3-phosphate + NAD(+) = dihydroxyacetone phosphate + NADH + H(+). It carries out the reaction sn-glycerol 3-phosphate + NADP(+) = dihydroxyacetone phosphate + NADPH + H(+). The protein operates within membrane lipid metabolism; glycerophospholipid metabolism. Functionally, catalyzes the reduction of the glycolytic intermediate dihydroxyacetone phosphate (DHAP) to sn-glycerol 3-phosphate (G3P), the key precursor for phospholipid synthesis. The protein is Glycerol-3-phosphate dehydrogenase [NAD(P)+] of Geobacter metallireducens (strain ATCC 53774 / DSM 7210 / GS-15).